The primary structure comprises 491 residues: Fatty acyl-CoA reductase 1 (491 aa).

It belongs to the fatty acyl-CoA reductase family. Expressed in the endodermal cell layer surrounding the central vasculature in roots. Expressed in the hilum region of seeds. Expressed in lateral root tips, cotyledons, the shoot apex, young leaves, petals, stamen filaments, and receptacle of siliques.

It catalyses the reaction a long-chain fatty acyl-CoA + 2 NADPH + 2 H(+) = a long-chain primary fatty alcohol + 2 NADP(+) + CoA. Catalyzes the reduction of fatty acyl-CoA to fatty alcohols. Catalyzes specifically the formation of C18:0 and C22:0 fatty alcohols. Provides the fatty alcohols required for synthesis of suberin in roots, seed coat and wound-induced leaf tissue. Provides the fatty alcohols required for synthesis of alkyl hydroxycinnamates in root waxes. The chain is Fatty acyl-CoA reductase 1 from Arabidopsis thaliana (Mouse-ear cress).